We begin with the raw amino-acid sequence, 123 residues long: ATP synthase epsilon chain (123 aa).

Belongs to the ATPase epsilon chain family. F-type ATPases have 2 components, CF(1) - the catalytic core - and CF(0) - the membrane proton channel. CF(1) has five subunits: alpha(3), beta(3), gamma(1), delta(1), epsilon(1). CF(0) has three main subunits: a, b and c.

The protein resides in the cell inner membrane. Produces ATP from ADP in the presence of a proton gradient across the membrane. The sequence is that of ATP synthase epsilon chain from Helicobacter pylori (strain Shi470).